A 503-amino-acid polypeptide reads, in one-letter code: SusD-like protein P38 (503 aa).

An N-terminal signal peptide occupies residues 1–21 (MKKFKNISITFLILISLGVLN).

It belongs to the SusD family.

It is found in the cell outer membrane. Polysaccharide-binding protein probably involved in ulvan degradation. Ulvan is the main polysaccharide component of the Ulvales (green seaweed) cell wall. It is composed of disaccharide building blocks comprising 3-sulfated rhamnose (Rha3S) linked to D-glucuronic acid (GlcA), L-iduronic acid (IduA), or D-xylose (Xyl). The SusD-like protein may mediate ulvan oligomer-binding before transport in the periplasm for further degradation. The polypeptide is SusD-like protein P38 (Formosa agariphila (strain DSM 15362 / KCTC 12365 / LMG 23005 / KMM 3901 / M-2Alg 35-1)).